The primary structure comprises 337 residues: Succinylglutamate desuccinylase (337 aa).

Zn(2+) is bound by residues histidine 59, glutamate 62, and histidine 152. The active site involves glutamate 216.

The protein belongs to the AspA/AstE family. Succinylglutamate desuccinylase subfamily. The cofactor is Zn(2+).

It carries out the reaction N-succinyl-L-glutamate + H2O = L-glutamate + succinate. It participates in amino-acid degradation; L-arginine degradation via AST pathway; L-glutamate and succinate from L-arginine: step 5/5. Transforms N(2)-succinylglutamate into succinate and glutamate. The chain is Succinylglutamate desuccinylase from Ectopseudomonas mendocina (strain ymp) (Pseudomonas mendocina).